A 102-amino-acid chain; its full sequence is Small ribosomal subunit protein uS10 (102 aa).

Belongs to the universal ribosomal protein uS10 family. In terms of assembly, part of the 30S ribosomal subunit.

Its function is as follows. Involved in the binding of tRNA to the ribosomes. This chain is Small ribosomal subunit protein uS10, found in Frankia alni (strain DSM 45986 / CECT 9034 / ACN14a).